Here is a 332-residue protein sequence, read N- to C-terminus: Ribosomal RNA small subunit methyltransferase H (332 aa).

S-adenosyl-L-methionine is bound by residues 36-38 (GGY), Asp54, Phe81, Asp102, and Gln109. Positions 295–322 (PRARSAKLRGAERTESPAHAAGDLPGWP) are disordered.

It belongs to the methyltransferase superfamily. RsmH family.

It localises to the cytoplasm. The enzyme catalyses cytidine(1402) in 16S rRNA + S-adenosyl-L-methionine = N(4)-methylcytidine(1402) in 16S rRNA + S-adenosyl-L-homocysteine + H(+). Its function is as follows. Specifically methylates the N4 position of cytidine in position 1402 (C1402) of 16S rRNA. The polypeptide is Ribosomal RNA small subunit methyltransferase H (Rhodopseudomonas palustris (strain ATCC BAA-98 / CGA009)).